The primary structure comprises 599 residues: Beta-glucuronidase (599 aa).

2 residues coordinate D-glucuronate: D160 and N407. Residue E408 is the Proton donor of the active site. Residues N462, Y468, E501, W546, and K565 each coordinate D-glucuronate. E501 acts as the Nucleophile in catalysis. An N-K motif motif is present at residues 563 to 565 (NHK).

It belongs to the glycosyl hydrolase 2 family.

It carries out the reaction a beta-D-glucuronoside + H2O = D-glucuronate + an alcohol. With respect to regulation, inhibited by a set of synthetic compounds like thio-urea derivatives and analogs. Inhibitors of gut microbial beta-glucuronidases are expected to block the reactivation of glucuronidated cancer drugs, and to alleviate drug-induced GI toxicity. Its function is as follows. Displays beta-glucuronidase activity with the artificial substrate p-nitrophenyl-beta-D-glucuronide (PNPG). Is likely capable of scavenging glucuronate from a range of chemically distinct xenobiotic and endobiotic glucuronides present in the gastrointestinal (GI) tract, to be able to utilize these diverse sources of carbon. As part of the GI microbiome, this enzyme would be able to reactivate glucuronide drug conjugates, such reactivated compounds can significantly damage the GI tract. The chain is Beta-glucuronidase from Streptococcus agalactiae serotype V (strain ATCC BAA-611 / 2603 V/R).